The chain runs to 431 residues: O-methyltransferase xanE (431 aa).

D283 contributes to the S-adenosyl-L-methionine binding site. H330 functions as the Proton acceptor in the catalytic mechanism.

The protein belongs to the class I-like SAM-binding methyltransferase superfamily. Cation-independent O-methyltransferase family.

The protein operates within secondary metabolite biosynthesis. O-methyltransferase; part of the gene cluster that mediates the biosynthesis of the isocyanide xanthocillin and its derivatives. The first step of the pathway consists in the conversion of tyrosine into a vinyl-isonitrile intermediate by the isocyanide synthase xanB. Subsequent oxidative dimerization of this intermediate to form xanthocillin may involve the cytochrome P450 monooxygenase xanG, whose expression is coregulated with that of XanB. Xanthocillin can be further modified by the isonitrile hydratase-like protein xanA which introduces N-formyl groups and the methyltransferase xanE which introduces methyl groups, leading to the production of several derivatives including fumiformamide. Finally, fumiformamide can be subject to both oxidative and reductive cyclization to yield melanocins E and F, respectively. The chain is O-methyltransferase xanE from Aspergillus fumigatus (strain ATCC MYA-4609 / CBS 101355 / FGSC A1100 / Af293) (Neosartorya fumigata).